We begin with the raw amino-acid sequence, 85 residues long: Large ribosomal subunit protein bL27 (85 aa).

This sequence belongs to the bacterial ribosomal protein bL27 family.

This Campylobacter concisus (strain 13826) protein is Large ribosomal subunit protein bL27.